Reading from the N-terminus, the 257-residue chain is UPF0246 protein PC1_3665 (257 aa).

It belongs to the UPF0246 family.

This is UPF0246 protein PC1_3665 from Pectobacterium carotovorum subsp. carotovorum (strain PC1).